Here is a 483-residue protein sequence, read N- to C-terminus: MSLFDHSLTKLHELLAAKEINVSDLVDVSYKRIADVDSKVKAFLTLDEERARDLAKKLDEVDASEKGVLFGMPIGIKDNIVTKGLRTTCSSKILENFDPIYDATVVTKLRGAETVTIGKINMDEFAMGSSNENSAFQVTTNPWNTDYVPGGSSGGSAAAVAAGEVPFALGSDTGGSIRQPAAYCGVVGLKPTYGRVSRYGLVAFASSLDQIGPITRTVEDNAYLLEAIAGHCPADSTSADLPVPPYRESLTGEIKGLRIGVPSEYIGDGVSEEMRKAVFDALNVLEKEGAVWEEVSLPYSKYALAAYYVIASSEASANLARFDGVRYGYRTDNADNLLDMYKNTRAEGFGDEVKRRIMLGTFALSSGYYDAYYKKAQQVRTLIKKDFDDVFTNYDVIIGPTTPTPAFKIGAKTDDPLTMYANDILTIPVNLAGVPALSLPCGFKDGLPLGLQIIGKHFDEATIYRVADVYEKATNFSKEKPSL.

Active-site charge relay system residues include K77 and S152. S176 (acyl-ester intermediate) is an active-site residue.

Belongs to the amidase family. GatA subfamily. In terms of assembly, heterotrimer of A, B and C subunits.

The catalysed reaction is L-glutamyl-tRNA(Gln) + L-glutamine + ATP + H2O = L-glutaminyl-tRNA(Gln) + L-glutamate + ADP + phosphate + H(+). Functionally, allows the formation of correctly charged Gln-tRNA(Gln) through the transamidation of misacylated Glu-tRNA(Gln) in organisms which lack glutaminyl-tRNA synthetase. The reaction takes place in the presence of glutamine and ATP through an activated gamma-phospho-Glu-tRNA(Gln). The protein is Glutamyl-tRNA(Gln) amidotransferase subunit A of Shouchella clausii (strain KSM-K16) (Alkalihalobacillus clausii).